A 222-amino-acid chain; its full sequence is GTP cyclohydrolase 1 (222 aa).

Zn(2+)-binding residues include Cys111, His114, and Cys182.

This sequence belongs to the GTP cyclohydrolase I family. As to quaternary structure, toroid-shaped homodecamer, composed of two pentamers of five dimers.

The catalysed reaction is GTP + H2O = 7,8-dihydroneopterin 3'-triphosphate + formate + H(+). Its pathway is cofactor biosynthesis; 7,8-dihydroneopterin triphosphate biosynthesis; 7,8-dihydroneopterin triphosphate from GTP: step 1/1. With respect to regulation, allosteric enzyme. Activity is modulated by K(+), divalent cations, UTP, and tetrahydrobiopterin. Tetrahydrobiopterin is an inhibitor of this enzyme. In Salmonella typhi, this protein is GTP cyclohydrolase 1.